A 222-amino-acid polypeptide reads, in one-letter code: 25 kDa elongation factor 1-beta (222 aa).

Over residues 75-94 (TSASAPAKQAPKKAASAPAK) the composition is skewed to low complexity. A disordered region spans residues 75–98 (TSASAPAKQAPKKAASAPAKQADE).

Belongs to the EF-1-beta/EF-1-delta family. In terms of assembly, EF-1 is composed of 4 subunits: alpha, beta, delta, and gamma.

Its function is as follows. EF-1-beta and EF-1-delta stimulate the exchange of GDP bound to EF-1-alpha to GTP. In Trypanosoma cruzi, this protein is 25 kDa elongation factor 1-beta.